Here is a 948-residue protein sequence, read N- to C-terminus: UvrABC system protein A (948 aa).

33–40 (GLSGSGKS) is an ATP binding site. The C4-type zinc finger occupies 252 to 279 (CPICGFSIGELEPRMFSFNSPFGACPTC). 2 ABC transporter domains span residues 309-587 (WIPT…KKSL) and 607-935 (ASDR…KYLK). 639-646 (GVSGSGKS) is an ATP binding site. The segment at 738 to 764 (CEACKGDGIIKIEMHFLPDVYVPCEVC) adopts a C4-type zinc-finger fold.

Belongs to the ABC transporter superfamily. UvrA family. As to quaternary structure, forms a heterotetramer with UvrB during the search for lesions.

The protein localises to the cytoplasm. Its function is as follows. The UvrABC repair system catalyzes the recognition and processing of DNA lesions. UvrA is an ATPase and a DNA-binding protein. A damage recognition complex composed of 2 UvrA and 2 UvrB subunits scans DNA for abnormalities. When the presence of a lesion has been verified by UvrB, the UvrA molecules dissociate. The polypeptide is UvrABC system protein A (Staphylococcus aureus (strain MSSA476)).